Here is a 418-residue protein sequence, read N- to C-terminus: Adenylosuccinate synthetase (418 aa).

GTP-binding positions include glycine 12 to lysine 18 and glycine 40 to threonine 42. The active-site Proton acceptor is aspartate 13. Residues aspartate 13 and glycine 40 each coordinate Mg(2+). IMP is bound by residues aspartate 13–lysine 16, asparagine 38–histidine 41, threonine 128, arginine 142, glutamine 221, threonine 236, and arginine 299. The active-site Proton donor is the histidine 41. Alanine 295 to arginine 301 is a binding site for substrate. GTP-binding positions include arginine 301, lysine 327–aspartate 329, and serine 399–glycine 401.

The protein belongs to the adenylosuccinate synthetase family. Homodimer. Requires Mg(2+) as cofactor.

The protein resides in the cytoplasm. It catalyses the reaction IMP + L-aspartate + GTP = N(6)-(1,2-dicarboxyethyl)-AMP + GDP + phosphate + 2 H(+). It participates in purine metabolism; AMP biosynthesis via de novo pathway; AMP from IMP: step 1/2. Functionally, plays an important role in the de novo pathway of purine nucleotide biosynthesis. Catalyzes the first committed step in the biosynthesis of AMP from IMP. This chain is Adenylosuccinate synthetase, found in Finegoldia magna (strain ATCC 29328 / DSM 20472 / WAL 2508) (Peptostreptococcus magnus).